Here is a 187-residue protein sequence, read N- to C-terminus: Adenylate kinase (187 aa).

Residue 12–17 (GAGKGT) participates in ATP binding. Residues 32 to 61 (STGDIFRANLAENTELGQKARQFMDAGDLV) form an NMP region. AMP-binding positions include Thr-33, Arg-38, 59 to 61 (DLV), 87 to 90 (GYPR), and Gln-94. The LID stretch occupies residues 128-134 (GRGRADD). An ATP-binding site is contributed by Arg-129. Arg-131 and Arg-142 together coordinate AMP. Arg-170 provides a ligand contact to ATP.

This sequence belongs to the adenylate kinase family. In terms of assembly, monomer.

The protein localises to the cytoplasm. The catalysed reaction is AMP + ATP = 2 ADP. The protein operates within purine metabolism; AMP biosynthesis via salvage pathway; AMP from ADP: step 1/1. In terms of biological role, catalyzes the reversible transfer of the terminal phosphate group between ATP and AMP. Plays an important role in cellular energy homeostasis and in adenine nucleotide metabolism. The protein is Adenylate kinase of Leuconostoc mesenteroides subsp. mesenteroides (strain ATCC 8293 / DSM 20343 / BCRC 11652 / CCM 1803 / JCM 6124 / NCDO 523 / NBRC 100496 / NCIMB 8023 / NCTC 12954 / NRRL B-1118 / 37Y).